The sequence spans 203 residues: Nascent polypeptide-associated complex subunit alpha-like protein 1 (203 aa).

Residues 1–23 (MTTEEKEILAAKLEEQKIDLDKP) are compositionally biased toward basic and acidic residues. Residues 1–71 (MTTEEKEILA…SEKKSRKAML (71 aa)) form a disordered region. The span at 24–50 (EVEDDDDNEDDDSDDDDKDDDEADGLD) shows a compositional bias: acidic residues. At Ser-36 the chain carries Phosphoserine. One can recognise an NAC-A/B domain in the interval 60–125 (SRSEKKSRKA…AKIEDLSSQI (66 aa)). Positions 158–203 (EVDEEGVEPKDIELVMTQAGVSRPNAVKALKAADGDIVSAIMELTT) constitute a UBA domain.

Belongs to the NAC-alpha family.

In terms of biological role, may promote appropriate targeting of ribosome-nascent polypeptide complexes. This Arabidopsis thaliana (Mouse-ear cress) protein is Nascent polypeptide-associated complex subunit alpha-like protein 1.